Reading from the N-terminus, the 151-residue chain is Protein-export protein SecB (151 aa).

The protein belongs to the SecB family. As to quaternary structure, homotetramer, a dimer of dimers. One homotetramer interacts with 1 SecA dimer.

Its subcellular location is the cytoplasm. One of the proteins required for the normal export of preproteins out of the cell cytoplasm. It is a molecular chaperone that binds to a subset of precursor proteins, maintaining them in a translocation-competent state. It also specifically binds to its receptor SecA. This chain is Protein-export protein SecB, found in Azoarcus sp. (strain BH72).